Here is a 339-residue protein sequence, read N- to C-terminus: Ribosomal RNA large subunit methyltransferase M (339 aa).

S-adenosyl-L-methionine-binding positions include serine 176, 206-209 (APGG), aspartate 225, aspartate 245, and aspartate 261. The active-site Proton acceptor is lysine 290.

It belongs to the class I-like SAM-binding methyltransferase superfamily. RNA methyltransferase RlmE family. RlmM subfamily. Monomer.

The protein resides in the cytoplasm. It catalyses the reaction cytidine(2498) in 23S rRNA + S-adenosyl-L-methionine = 2'-O-methylcytidine(2498) in 23S rRNA + S-adenosyl-L-homocysteine + H(+). Catalyzes the 2'-O-methylation at nucleotide C2498 in 23S rRNA. The sequence is that of Ribosomal RNA large subunit methyltransferase M from Halorhodospira halophila (strain DSM 244 / SL1) (Ectothiorhodospira halophila (strain DSM 244 / SL1)).